A 383-amino-acid polypeptide reads, in one-letter code: Acetylornithine deacetylase (383 aa).

Residue His80 coordinates Zn(2+). Asp82 is an active-site residue. Asp112 provides a ligand contact to Zn(2+). Glu144 is an active-site residue. Residues Glu145, Glu169, and His355 each contribute to the Zn(2+) site.

Belongs to the peptidase M20A family. ArgE subfamily. As to quaternary structure, homodimer. It depends on Zn(2+) as a cofactor. Co(2+) serves as cofactor. Requires glutathione as cofactor.

Its subcellular location is the cytoplasm. It carries out the reaction N(2)-acetyl-L-ornithine + H2O = L-ornithine + acetate. The protein operates within amino-acid biosynthesis; L-arginine biosynthesis; L-ornithine from N(2)-acetyl-L-ornithine (linear): step 1/1. Catalyzes the hydrolysis of the amide bond of N(2)-acetylated L-amino acids. Cleaves the acetyl group from N-acetyl-L-ornithine to form L-ornithine, an intermediate in L-arginine biosynthesis pathway, and a branchpoint in the synthesis of polyamines. This is Acetylornithine deacetylase from Edwardsiella ictaluri (strain 93-146).